The following is a 408-amino-acid chain: Lupus La protein (408 aa).

The 93-residue stretch at Asn7–Glu99 folds into the HTH La-type RNA-binding domain. Phosphoserine occurs at positions 92 and 94. The 77-residue stretch at Arg111–Asp187 folds into the RRM domain. N6-acetyllysine is present on Lys116. Phosphothreonine is present on Thr120. An N6-acetyllysine modification is found at Lys128. Ser225 carries the phosphoserine modification. The region spanning Glu227 to Pro348 is the xRRM domain. N6-acetyllysine occurs at positions 328, 341, and 360. Residues Trp329–Gly342 are compositionally biased toward basic residues. Residues Trp329–Gln408 are disordered. Phosphothreonine is present on Thr362. At Ser366 the chain carries Phosphoserine; by CK2. A compositionally biased stretch (basic and acidic residues) spans Arg384 to Ala395.

As to quaternary structure, interacts with DDX15. May interact with RUFY1. Phosphorylated. The phosphorylation sites are at the C-terminal part of the protein. In terms of processing, the N-terminus is blocked.

The protein localises to the nucleus. Functionally, binds to the 3' poly(U) terminus of nascent RNA polymerase III transcripts, protecting them from exonuclease digestion and facilitating their folding and maturation. In case of Coxsackievirus B3 infection, binds to the viral internal ribosome entry site (IRES) and stimulates the IRES-mediated translation. The sequence is that of Lupus La protein (SSB) from Homo sapiens (Human).